Consider the following 279-residue polypeptide: Small ribosomal subunit protein uS2 (279 aa).

Belongs to the universal ribosomal protein uS2 family. In terms of assembly, component of the small ribosomal subunit. Mature ribosomes consist of a small (40S) and a large (60S) subunit. The 40S subunit contains about 33 different proteins and 1 molecule of RNA (18S). The 60S subunit contains about 49 different proteins and 3 molecules of RNA (28S, 5.8S and 5S). Interacts with ribosomal protein S21.

It localises to the cytoplasm. Required for the assembly and/or stability of the 40S ribosomal subunit. Required for the processing of the 20S rRNA-precursor to mature 18S rRNA in a late step of the maturation of 40S ribosomal subunits. The chain is Small ribosomal subunit protein uS2 from Schistosoma japonicum (Blood fluke).